The following is an 81-amino-acid chain: Large ribosomal subunit protein bL27 (81 aa).

Residues 1–11 are compositionally biased toward polar residues; it reads MATSKSGGSSK. Positions 1 to 23 are disordered; sequence MATSKSGGSSKNGRDSISKRLGV.

It belongs to the bacterial ribosomal protein bL27 family.

In Borrelia garinii subsp. bavariensis (strain ATCC BAA-2496 / DSM 23469 / PBi) (Borreliella bavariensis), this protein is Large ribosomal subunit protein bL27.